We begin with the raw amino-acid sequence, 410 residues long: LL-diaminopimelate aminotransferase (410 aa).

Tyr-15 and Gly-42 together coordinate substrate. Pyridoxal 5'-phosphate is bound by residues Tyr-72, 108–109 (AK), Tyr-132, Asn-187, Tyr-218, and 246–248 (SFS). Residues Lys-109, Tyr-132, and Asn-187 each coordinate substrate. The residue at position 249 (Lys-249) is an N6-(pyridoxal phosphate)lysine. Pyridoxal 5'-phosphate-binding residues include Arg-257 and Asn-292. Substrate-binding residues include Asn-292 and Arg-388.

Belongs to the class-I pyridoxal-phosphate-dependent aminotransferase family. LL-diaminopimelate aminotransferase subfamily. Homodimer. Requires pyridoxal 5'-phosphate as cofactor.

The catalysed reaction is (2S,6S)-2,6-diaminopimelate + 2-oxoglutarate = (S)-2,3,4,5-tetrahydrodipicolinate + L-glutamate + H2O + H(+). It participates in amino-acid biosynthesis; L-lysine biosynthesis via DAP pathway; LL-2,6-diaminopimelate from (S)-tetrahydrodipicolinate (aminotransferase route): step 1/1. Involved in the synthesis of meso-diaminopimelate (m-DAP or DL-DAP), required for both lysine and peptidoglycan biosynthesis. Catalyzes the direct conversion of tetrahydrodipicolinate to LL-diaminopimelate. Is also able to catalyze the reverse reaction in vitro, i.e. the transamination of LL-diaminopimelate with 2-oxoglutarate to produce 2-oxo-6-aminopimelate (in equilibrium with tetrahydrodipicolinate) and glutamate. Has maximal aminotransferase activity using 2-oxoglutarate as an amino group acceptor, and cannot use oxaloacetate instead of 2-oxoglutarate, although 2-oxoadipate can substitute with 21% relative activity. Cannot use m-DAP, lysine or ornithine as the amino-group donor, when using 2-oxoglutarate as the amino-group acceptor. The protein is LL-diaminopimelate aminotransferase of Methanothermobacter thermautotrophicus (strain ATCC 29096 / DSM 1053 / JCM 10044 / NBRC 100330 / Delta H) (Methanobacterium thermoautotrophicum).